Consider the following 602-residue polypeptide: Elongation factor 4 (602 aa).

Positions 8-190 (DLIRNFSIVA…AIVHRLPPPK (183 aa)) constitute a tr-type G domain. GTP-binding positions include 20-25 (DHGKST) and 137-140 (NKID).

Belongs to the TRAFAC class translation factor GTPase superfamily. Classic translation factor GTPase family. LepA subfamily.

It is found in the cell inner membrane. It carries out the reaction GTP + H2O = GDP + phosphate + H(+). Functionally, required for accurate and efficient protein synthesis under certain stress conditions. May act as a fidelity factor of the translation reaction, by catalyzing a one-codon backward translocation of tRNAs on improperly translocated ribosomes. Back-translocation proceeds from a post-translocation (POST) complex to a pre-translocation (PRE) complex, thus giving elongation factor G a second chance to translocate the tRNAs correctly. Binds to ribosomes in a GTP-dependent manner. The sequence is that of Elongation factor 4 from Cereibacter sphaeroides (strain ATCC 17023 / DSM 158 / JCM 6121 / CCUG 31486 / LMG 2827 / NBRC 12203 / NCIMB 8253 / ATH 2.4.1.) (Rhodobacter sphaeroides).